The primary structure comprises 119 residues: Nascent polypeptide-associated complex protein (119 aa).

The NAC-A/B domain maps to 5–73 (RMNSREMRRL…FRETPKKQEG (69 aa)).

It belongs to the NAC-alpha family. Homodimer. Interacts with the ribosome. Binds ribosomal RNA.

Its function is as follows. Contacts the emerging nascent chain on the ribosome. The chain is Nascent polypeptide-associated complex protein from Thermoplasma volcanium (strain ATCC 51530 / DSM 4299 / JCM 9571 / NBRC 15438 / GSS1).